The sequence spans 518 residues: GRIN2-like protein (518 aa).

Disordered stretches follow at residues 1–23 (MGLE…QSRT) and 467–500 (QTEP…FRTM). The segment covering 476–494 (KSDEDPLNKEPSSDKMEKK) has biased composition (basic and acidic residues).

As to quaternary structure, may interact with GNAO1.

May be involved in neurite outgrowth. The chain is GRIN2-like protein from Gallus gallus (Chicken).